Here is an 88-residue protein sequence, read N- to C-terminus: Sec-independent protein translocase protein TatA (88 aa).

The chain crosses the membrane as a helical span at residues L4 to G24. Residues A45–P88 are disordered. The segment covering S75–P88 has biased composition (low complexity).

This sequence belongs to the TatA/E family. In terms of assembly, the Tat system comprises two distinct complexes: a TatABC complex, containing multiple copies of TatA, TatB and TatC subunits, and a separate TatA complex, containing only TatA subunits. Substrates initially bind to the TatABC complex, which probably triggers association of the separate TatA complex to form the active translocon.

It localises to the cell inner membrane. Its function is as follows. Part of the twin-arginine translocation (Tat) system that transports large folded proteins containing a characteristic twin-arginine motif in their signal peptide across membranes. TatA could form the protein-conducting channel of the Tat system. In Gluconacetobacter diazotrophicus (strain ATCC 49037 / DSM 5601 / CCUG 37298 / CIP 103539 / LMG 7603 / PAl5), this protein is Sec-independent protein translocase protein TatA.